The following is a 215-amino-acid chain: Cytochrome b6 (215 aa).

A helical transmembrane segment spans residues 32 to 52 (IFYCLGGITLTCFLVQVATGF). C35 is a heme c binding site. Heme b is bound by residues H86 and H100. 3 helical membrane-spanning segments follow: residues 90–110 (ASMM…TGGF), 116–136 (LTWV…VTGY), and 186–206 (LHTF…FLMI). Heme b is bound by residues H187 and H202.

This sequence belongs to the cytochrome b family. PetB subfamily. The 4 large subunits of the cytochrome b6-f complex are cytochrome b6, subunit IV (17 kDa polypeptide, PetD), cytochrome f and the Rieske protein, while the 4 small subunits are PetG, PetL, PetM and PetN. The complex functions as a dimer. It depends on heme b as a cofactor. Requires heme c as cofactor.

It is found in the plastid. Its subcellular location is the chloroplast thylakoid membrane. Functionally, component of the cytochrome b6-f complex, which mediates electron transfer between photosystem II (PSII) and photosystem I (PSI), cyclic electron flow around PSI, and state transitions. The chain is Cytochrome b6 from Pelargonium hortorum (Common geranium).